Here is a 523-residue protein sequence, read N- to C-terminus: Maintenance of mitochondrial morphology protein 1 (523 aa).

Topologically, residues M1–G43 are lumenal. Residues L44–F64 form a helical membrane-spanning segment. Residues G65 to T523 lie on the Cytoplasmic side of the membrane. Disordered regions lie at residues P70 to T118, Y128 to H147, T295 to G349, R420 to L474, and G492 to T523. Composition is skewed to polar residues over residues G74–S96 and S105–T118. The segment covering T137 to H147 has biased composition (basic residues). An SMP-LTD domain is found at Q151–P412. Residues T295 to E312 show a composition bias toward polar residues. Residues G449–R468 show a composition bias toward gly residues.

Belongs to the MMM1 family. As to quaternary structure, homodimer. Component of the ER-mitochondria encounter structure (ERMES) or MDM complex, composed of MMM1, MDM10, MDM12 and MDM34. An MMM1 homodimer associates with one molecule of MDM12 on each side in a pairwise head-to-tail manner, and the SMP-LTD domains of MMM1 and MDM12 generate a continuous hydrophobic tunnel for phospholipid trafficking.

Its subcellular location is the endoplasmic reticulum membrane. Functionally, component of the ERMES/MDM complex, which serves as a molecular tether to connect the endoplasmic reticulum (ER) and mitochondria. Components of this complex are involved in the control of mitochondrial shape and protein biogenesis, and function in nonvesicular lipid trafficking between the ER and mitochondria. The MDM12-MMM1 subcomplex functions in the major beta-barrel assembly pathway that is responsible for biogenesis of all outer membrane beta-barrel proteins, and acts in a late step after the SAM complex. The MDM10-MDM12-MMM1 subcomplex further acts in the TOM40-specific pathway after the action of the MDM12-MMM1 complex. Essential for establishing and maintaining the structure of mitochondria and maintenance of mtDNA nucleoids. This Paracoccidioides lutzii (strain ATCC MYA-826 / Pb01) (Paracoccidioides brasiliensis) protein is Maintenance of mitochondrial morphology protein 1.